The following is a 152-amino-acid chain: Mitochondrial fission 1 protein (152 aa).

An N-acetylmethionine modification is found at methionine 1. Topologically, residues 1–122 (MEAVLNELVS…LIDKAMKKDG (122 aa)) are cytoplasmic. Position 10 is a phosphoserine (serine 10). The TPR repeat unit spans residues 71–104 (RDYVFYLAVGNYRLKEYEKALKYVRGLLQTEPQN). Residues 123 to 143 (LVGMAIVGGMALGVAGLAGLI) form a helical membrane-spanning segment. Residues 144-152 (GLAVSKSKS) are Mitochondrial intermembrane-facing.

The protein belongs to the FIS1 family. Interacts with DNM1L/DLP1 through the TPR region; may form part of a larger protein complex at the endoplasmic reticulum-mitochondrial interface during mitochondrial fission. Interacts with MARCHF5. Interacts with MIEF1. Interacts with PEX11A, PEX11B and PEX11G. In terms of processing, ubiquitinated by MARCHF5.

The protein resides in the mitochondrion outer membrane. The protein localises to the peroxisome membrane. In terms of biological role, involved in the fragmentation of the mitochondrial network and its perinuclear clustering. Plays a minor role in the recruitment and association of the fission mediator dynamin-related protein 1 (DNM1L) to the mitochondrial surface and mitochondrial fission. May not be essential for the assembly of functional fission complexes and the subsequent membrane scission event. Also mediates peroxisomal fission. May act when the products of fission are directed toward mitochondrial homeostasis, mitophagy, or apoptosis. Can induce cytochrome c release from the mitochondrion to the cytosol, ultimately leading to apoptosis. The chain is Mitochondrial fission 1 protein from Rattus norvegicus (Rat).